The primary structure comprises 421 residues: Mitochondrial tRNA-specific 2-thiouridylase 1 (421 aa).

ATP is bound by residues 10–17 (ALSGGVDS) and methionine 36. Positions 96–98 (NPD) are interaction with target base in tRNA. Cysteine 101 acts as the Nucleophile in catalysis. Cysteines 101 and 222 form a disulfide. ATP is bound at residue glycine 126. Positions 171 to 173 (KDQ) are interaction with tRNA. Catalysis depends on cysteine 222, which acts as the Cysteine persulfide intermediate. The tract at residues 334 to 335 (RH) is interaction with tRNA. The segment at 395 to 421 (KGQRRAGMATESPSDSPEDGPGLSPLL) is disordered.

Belongs to the MnmA/TRMU family. Ubiquitous. Abundantly expressed in tissues with high metabolic rates including heart, liver, kidney, and brain.

The protein localises to the mitochondrion. The catalysed reaction is 5-taurinomethyluridine(34) in tRNA + S-sulfanyl-L-cysteinyl-[protein] + AH2 + ATP = 5-taurinomethyl-2-thiouridine(34) in tRNA + L-cysteinyl-[protein] + A + AMP + diphosphate + H(+). Its function is as follows. Catalyzes the 2-thiolation of uridine at the wobble position (U34) of mitochondrial tRNA(Lys), tRNA(Glu) and tRNA(Gln). Required for the formation of 5-taurinomethyl-2-thiouridine (tm5s2U) of mitochondrial tRNA(Lys), tRNA(Glu), and tRNA(Gln) at the wobble position. ATP is required to activate the C2 atom of the wobble base. The sequence is that of Mitochondrial tRNA-specific 2-thiouridylase 1 (TRMU) from Homo sapiens (Human).